Consider the following 319-residue polypeptide: Protein-methionine methyltransferase laeA (319 aa).

Residues 269-293 (REPQSGTCSVQRENGANGDRSTLSA) are disordered. Positions 270 to 293 (EPQSGTCSVQRENGANGDRSTLSA) are enriched in polar residues.

It belongs to the methyltransferase superfamily. LaeA methyltransferase family. In terms of assembly, component of the heterotrimeric velvet complex composed of laeA, veA and velB; VeA acting as a bridging protein between laeA and velB.

The protein resides in the nucleus. The catalysed reaction is L-methionyl-[protein] + S-adenosyl-L-methionine = S-methyl-L-methionyl-[protein] + S-adenosyl-L-homocysteine. In terms of biological role, methyltransferase; component of the velvet transcription factor complex that acts as a global regulator for secondary metabolite gene expression. Controls the expression of the chaetoglobosin A biosynthesis cluster via the cheR transcription factor and the subsequent production of chaetoglobosin A. Positively regulates the expression of smtA and negatively regulates the expression of velB. LaeA also regulates pigmentation and spores production. This chain is Protein-methionine methyltransferase laeA, found in Chaetomium globosum (strain ATCC 6205 / CBS 148.51 / DSM 1962 / NBRC 6347 / NRRL 1970) (Soil fungus).